The primary structure comprises 307 residues: Small ribosomal subunit biogenesis GTPase RsgA (307 aa).

Positions 80 to 237 constitute a CP-type G domain; the sequence is KVDLRQAIVS…IVDTPGIKEF (158 aa). GTP-binding positions include 129 to 132 and 180 to 188; these read NKID and GQSGVGKSS. Zn(2+) contacts are provided by cysteine 261, cysteine 266, histidine 268, and cysteine 274.

This sequence belongs to the TRAFAC class YlqF/YawG GTPase family. RsgA subfamily. Monomer. Associates with 30S ribosomal subunit, binds 16S rRNA. Requires Zn(2+) as cofactor.

The protein resides in the cytoplasm. One of several proteins that assist in the late maturation steps of the functional core of the 30S ribosomal subunit. Helps release RbfA from mature subunits. May play a role in the assembly of ribosomal proteins into the subunit. Circularly permuted GTPase that catalyzes slow GTP hydrolysis, GTPase activity is stimulated by the 30S ribosomal subunit. This chain is Small ribosomal subunit biogenesis GTPase RsgA, found in Borrelia garinii subsp. bavariensis (strain ATCC BAA-2496 / DSM 23469 / PBi) (Borreliella bavariensis).